The primary structure comprises 553 residues: CTP synthase (553 aa).

Residues Met1–Leu270 form an amidoligase domain region. Ser13 lines the CTP pocket. Ser13 serves as a coordination point for UTP. ATP-binding positions include Ser14 to Ile19 and Asp71. Mg(2+)-binding residues include Asp71 and Glu144. CTP contacts are provided by residues Asp151–Glu153, Lys191–Gln196, and Lys227. UTP contacts are provided by residues Lys191–Gln196 and Lys227. A Glutamine amidotransferase type-1 domain is found at Thr295–Ala547. Gly356 is an L-glutamine binding site. Cys383 (nucleophile; for glutamine hydrolysis) is an active-site residue. L-glutamine-binding positions include Leu384–Gln387, Glu407, and Arg473. Active-site residues include His520 and Glu522.

Belongs to the CTP synthase family. In terms of assembly, homotetramer.

The catalysed reaction is UTP + L-glutamine + ATP + H2O = CTP + L-glutamate + ADP + phosphate + 2 H(+). The enzyme catalyses L-glutamine + H2O = L-glutamate + NH4(+). It carries out the reaction UTP + NH4(+) + ATP = CTP + ADP + phosphate + 2 H(+). It participates in pyrimidine metabolism; CTP biosynthesis via de novo pathway; CTP from UDP: step 2/2. Allosterically activated by GTP, when glutamine is the substrate; GTP has no effect on the reaction when ammonia is the substrate. The allosteric effector GTP functions by stabilizing the protein conformation that binds the tetrahedral intermediate(s) formed during glutamine hydrolysis. Inhibited by the product CTP, via allosteric rather than competitive inhibition. Catalyzes the ATP-dependent amination of UTP to CTP with either L-glutamine or ammonia as the source of nitrogen. Regulates intracellular CTP levels through interactions with the four ribonucleotide triphosphates. This is CTP synthase from Polynucleobacter asymbioticus (strain DSM 18221 / CIP 109841 / QLW-P1DMWA-1) (Polynucleobacter necessarius subsp. asymbioticus).